Here is a 226-residue protein sequence, read N- to C-terminus: Probable GPI-anchored adhesin-like protein PGA28 (226 aa).

An N-terminal signal peptide occupies residues 1–26; that stretch reads MKFFAYFAVIALSSASLINLFKRATA. The interval 119–209 is disordered; the sequence is DTEATTGSDT…SQQTSSHAGG (91 aa). Low complexity predominate over residues 131–148; it reads KAATGATTSAGTGVTKTS. A compositionally biased stretch (polar residues) spans 149–160; that stretch reads ETGGVSSTANSE. Residues 161–208 show a composition bias toward low complexity; the sequence is AKSGSVTTSKSGSTSISESKTTSGSSSSGKSSSSTSSASSQQTSSHAG. Residue serine 197 is the site of GPI-anchor amidated serine attachment. Positions 198–226 are cleaved as a propeptide — removed in mature form; sequence ASSQQTSSHAGGASGAFVSLLGLFAALLI.

Predicted to be a cleavage substrate for KEX2.

The protein localises to the cell membrane. In terms of biological role, putative adhesin which is involved in cell adhesion and virulence. Plays a role in Candida-bacterial interactions and subsequent regulation of filamentation. This Candida albicans (strain SC5314 / ATCC MYA-2876) (Yeast) protein is Probable GPI-anchored adhesin-like protein PGA28 (PGA28).